The chain runs to 78 residues: Mu-conotoxin BuIIIB (78 aa).

Positions Met-1–Pro-22 are cleaved as a signal peptide. Residues Gln-23–Arg-51 constitute a propeptide that is removed on maturation. Residues Asp-26–Pro-46 are disordered. Basic and acidic residues predominate over residues Pro-28–Asp-38. 3 cysteine pairs are disulfide-bonded: Cys-56–Cys-68, Cys-57–Cys-74, and Cys-64–Cys-75. Cysteine amide is present on Cys-75.

This sequence belongs to the conotoxin M superfamily. In terms of tissue distribution, expressed by the venom duct.

Its subcellular location is the secreted. Mu-conotoxins block voltage-gated sodium channels (Nav). This synthetic toxin potently blocks rNav1.4/SCN4A (Kd=0.34-3.6 nM), rNav1.2/SCN2A (Kd=13 nM), rNav1.3/SCN3A (Kd=200 nM), rNav1.1/SCN1A (Kd=360 nM), mNav1.6/SCN8A (IC(50)=1.8 uM), rNav1.5/SCN5A (IC(50)=9 uM), rNav1.6/SCN8A (IC(50)&gt;30 uM). It is noteworthy that the toxin is 50-fold more potent on mouse Nav1.6 than on rat Nav1.6. The block of SCN4A is very slowly reversible. The chain is Mu-conotoxin BuIIIB from Conus bullatus (Bubble cone).